The primary structure comprises 134 residues: MSSAQMDPHDKMRSRDISKVARGQQAPRPAHTPGTVSPPPENEATFRAKRGDSGRETDAAVEERFPVTNETRHCFNRFMQYHKCIEKNGRDANDCNNLRDYVRSICPEELVSKIWLKSGRNKESQGHYQRQYED.

The tract at residues 1–61 (MSSAQMDPHD…DSGRETDAAV (61 aa)) is disordered. Basic and acidic residues-rich tracts occupy residues 7 to 19 (DPHD…DISK) and 44 to 61 (ATFR…DAAV). Residues 71 to 114 (TRHCFNRFMQYHKCIEKNGRDANDCNNLRDYVRSICPEELVSKI) form the CHCH domain. Residues 74 to 84 (CFNRFMQYHKC) carry the Cx9C motif motif. Cystine bridges form between cysteine 74–cysteine 106 and cysteine 84–cysteine 95. Positions 95 to 106 (CNNLRDYVRSIC) match the Cx10C motif motif.

It belongs to the cytochrome c oxidase subunit 6B (TC 3.D.4.8) family.

The protein localises to the mitochondrion. Functionally, this protein is one of the nuclear-coded polypeptide chains of cytochrome c oxidase, the terminal oxidase in mitochondrial electron transport. This protein may be one of the heme-binding subunits of the oxidase. This is Putative cytochrome c oxidase subunit 6b-like from Arabidopsis thaliana (Mouse-ear cress).